The primary structure comprises 206 residues: Na(+)-translocating NADH-quinone reductase subunit E (206 aa).

The next 6 helical transmembrane spans lie at 12–32 (AVFV…FLAV), 36–56 (ISSA…TVPV), 85–105 (FLGL…LEMF), 118–138 (GVFL…LFMV), 148–168 (VIYG…LAGI), and 184–204 (LGIT…FSGI).

It belongs to the NqrDE/RnfAE family. Composed of six subunits; NqrA, NqrB, NqrC, NqrD, NqrE and NqrF.

Its subcellular location is the cell inner membrane. It carries out the reaction a ubiquinone + n Na(+)(in) + NADH + H(+) = a ubiquinol + n Na(+)(out) + NAD(+). NQR complex catalyzes the reduction of ubiquinone-1 to ubiquinol by two successive reactions, coupled with the transport of Na(+) ions from the cytoplasm to the periplasm. NqrA to NqrE are probably involved in the second step, the conversion of ubisemiquinone to ubiquinol. In Chromohalobacter salexigens (strain ATCC BAA-138 / DSM 3043 / CIP 106854 / NCIMB 13768 / 1H11), this protein is Na(+)-translocating NADH-quinone reductase subunit E.